The sequence spans 108 residues: DNA-directed RNA polymerase subunit omega (108 aa).

This sequence belongs to the RNA polymerase subunit omega family. The RNAP catalytic core consists of 2 alpha, 1 beta, 1 beta' and 1 omega subunit. When a sigma factor is associated with the core the holoenzyme is formed, which can initiate transcription.

The enzyme catalyses RNA(n) + a ribonucleoside 5'-triphosphate = RNA(n+1) + diphosphate. Promotes RNA polymerase assembly. Latches the N- and C-terminal regions of the beta' subunit thereby facilitating its interaction with the beta and alpha subunits. The sequence is that of DNA-directed RNA polymerase subunit omega from Mycolicibacterium paratuberculosis (strain ATCC BAA-968 / K-10) (Mycobacterium paratuberculosis).